The chain runs to 457 residues: 3-ketoacyl-CoA thiolase 5, peroxisomal (457 aa).

The transit peptide at methionine 1 to cysteine 37 directs the protein to the peroxisome. Cysteine 137 acts as the Acyl-thioester intermediate in catalysis. Catalysis depends on proton acceptor residues histidine 394 and cysteine 426.

This sequence belongs to the thiolase-like superfamily. Thiolase family. As to quaternary structure, homodimer. Expressed in seedlings and wounded leaves.

It is found in the peroxisome. It catalyses the reaction an acyl-CoA + acetyl-CoA = a 3-oxoacyl-CoA + CoA. Its pathway is lipid metabolism; fatty acid metabolism. Functionally, probably involved in long chain fatty-acid beta-oxidation prior to gluconeogenesis during germination and subsequent seedling growth. Involved in systemic jasmonic acid (JA) biosynthesis after wounding and may be during senescence. The sequence is that of 3-ketoacyl-CoA thiolase 5, peroxisomal (KAT5) from Arabidopsis thaliana (Mouse-ear cress).